The chain runs to 298 residues: Aspartate carbamoyltransferase catalytic subunit (298 aa).

The carbamoyl phosphate site is built by R50 and T51. K79 contacts L-aspartate. Positions 100, 128, and 131 each coordinate carbamoyl phosphate. The L-aspartate site is built by R160 and R221. 2 residues coordinate carbamoyl phosphate: L260 and P261.

Belongs to the aspartate/ornithine carbamoyltransferase superfamily. ATCase family. Heterooligomer of catalytic and regulatory chains.

The enzyme catalyses carbamoyl phosphate + L-aspartate = N-carbamoyl-L-aspartate + phosphate + H(+). It functions in the pathway pyrimidine metabolism; UMP biosynthesis via de novo pathway; (S)-dihydroorotate from bicarbonate: step 2/3. Catalyzes the condensation of carbamoyl phosphate and aspartate to form carbamoyl aspartate and inorganic phosphate, the committed step in the de novo pyrimidine nucleotide biosynthesis pathway. This chain is Aspartate carbamoyltransferase catalytic subunit, found in Methanospirillum hungatei JF-1 (strain ATCC 27890 / DSM 864 / NBRC 100397 / JF-1).